Here is a 162-residue protein sequence, read N- to C-terminus: uncharacterized protein (162 aa).

The first 34 residues, 1-34, serve as a signal peptide directing secretion; that stretch reads MAREVISTSILMIATVVAVTAAIMVILPAVKDLA.

This is an uncharacterized protein from Archaeoglobus fulgidus (strain ATCC 49558 / DSM 4304 / JCM 9628 / NBRC 100126 / VC-16).